Here is a 269-residue protein sequence, read N- to C-terminus: Thiazole synthase (269 aa).

Residue Lys-112 is the Schiff-base intermediate with DXP of the active site. 1-deoxy-D-xylulose 5-phosphate-binding positions include Gly-173, 199–200, and 221–222; these read AG and NT.

It belongs to the ThiG family. In terms of assembly, homotetramer. Forms heterodimers with either ThiH or ThiS.

Its subcellular location is the cytoplasm. The enzyme catalyses [ThiS sulfur-carrier protein]-C-terminal-Gly-aminoethanethioate + 2-iminoacetate + 1-deoxy-D-xylulose 5-phosphate = [ThiS sulfur-carrier protein]-C-terminal Gly-Gly + 2-[(2R,5Z)-2-carboxy-4-methylthiazol-5(2H)-ylidene]ethyl phosphate + 2 H2O + H(+). The protein operates within cofactor biosynthesis; thiamine diphosphate biosynthesis. Catalyzes the rearrangement of 1-deoxy-D-xylulose 5-phosphate (DXP) to produce the thiazole phosphate moiety of thiamine. Sulfur is provided by the thiocarboxylate moiety of the carrier protein ThiS. In vitro, sulfur can be provided by H(2)S. This is Thiazole synthase from Caulobacter vibrioides (strain ATCC 19089 / CIP 103742 / CB 15) (Caulobacter crescentus).